Consider the following 337-residue polypeptide: F420-dependent glucose-6-phosphate dehydrogenase (337 aa).

Coenzyme F420-(gamma-Glu)n is bound at residue aspartate 40. Histidine 41 (proton donor) is an active-site residue. Coenzyme F420-(gamma-Glu)n is bound by residues threonine 77 and 108–109 (SG). Glutamate 110 functions as the Proton acceptor in the catalytic mechanism. Coenzyme F420-(gamma-Glu)n is bound by residues asparagine 113, 178–179 (GG), and 181–182 (VV). The substrate site is built by threonine 196, lysine 199, lysine 260, and arginine 284.

Belongs to the F420-dependent glucose-6-phosphate dehydrogenase family. In terms of assembly, homodimer.

The catalysed reaction is oxidized coenzyme F420-(gamma-L-Glu)(n) + D-glucose 6-phosphate + H(+) = 6-phospho-D-glucono-1,5-lactone + reduced coenzyme F420-(gamma-L-Glu)(n). Catalyzes the coenzyme F420-dependent oxidation of glucose 6-phosphate (G6P) to 6-phosphogluconolactone. This chain is F420-dependent glucose-6-phosphate dehydrogenase, found in Rhodococcus erythropolis (strain PR4 / NBRC 100887).